A 170-amino-acid chain; its full sequence is Cytidine diphosphoramidate kinase (170 aa).

The protein belongs to the APS kinase family.

The enzyme catalyses cytidine 5'-diphosphoramidate + ATP = cytidine 3'-phospho-5'-diphosphoramidate + ADP + H(+). It functions in the pathway capsule biogenesis; capsule polysaccharide biosynthesis. Involved in the biosynthesis of the O-methyl phosphoramidate (MeOPN) group found on the capsular polysaccharide (CPS) of C.jejuni. Catalyzes the ATP-dependent phosphorylation of cytidine diphosphoramidate (CDP-NH(2)) to form cytidine 3'-phosphate 5'-diphosphoramidate. Can also use other substrates such as the corresponding adenine and uridine diphosphoramidate derivatives or cytidine diphosphoramidate analogs, with lower efficiency. This is Cytidine diphosphoramidate kinase from Campylobacter jejuni subsp. jejuni serotype O:2 (strain ATCC 700819 / NCTC 11168).